An 828-amino-acid polypeptide reads, in one-letter code: Periplasmic nitrate reductase (828 aa).

The segment at residues 1–31 (MKLSRRSFMKANAVAAAAAAAGLSVPGVARA) is a signal peptide (tat-type signal). The 4Fe-4S Mo/W bis-MGD-type domain maps to 39–95 (IKWDKAPCRFCGTGCGVLVGTQQGRVVACQGDPDAPVNRGLNCIKGYFLPKIMYGKD). 4 residues coordinate [4Fe-4S] cluster: Cys-46, Cys-49, Cys-53, and Cys-81. Mo-bis(molybdopterin guanine dinucleotide)-binding positions include Lys-83, Gln-150, Asn-175, Cys-179, 212–219 (WGSNMAEM), 243–247 (STFQH), 262–264 (QSD), Met-372, Gln-376, Asn-482, 508–509 (SD), Lys-531, Asp-558, and 718–727 (TGRVLEHWHT). Phe-794 contributes to the substrate binding site. Mo-bis(molybdopterin guanine dinucleotide)-binding residues include Asn-802 and Lys-819.

Belongs to the prokaryotic molybdopterin-containing oxidoreductase family. NasA/NapA/NarB subfamily. Component of the periplasmic nitrate reductase NapAB complex composed of NapA and NapB. [4Fe-4S] cluster serves as cofactor. Mo-bis(molybdopterin guanine dinucleotide) is required as a cofactor. Predicted to be exported by the Tat system. The position of the signal peptide cleavage has not been experimentally proven.

It localises to the periplasm. The enzyme catalyses 2 Fe(II)-[cytochrome] + nitrate + 2 H(+) = 2 Fe(III)-[cytochrome] + nitrite + H2O. Functionally, catalytic subunit of the periplasmic nitrate reductase complex NapAB. Receives electrons from NapB and catalyzes the reduction of nitrate to nitrite. This chain is Periplasmic nitrate reductase, found in Salmonella paratyphi A (strain ATCC 9150 / SARB42).